Consider the following 643-residue polypeptide: Phosphatidylinositol-3,5-bisphosphate 3-phosphatase MTMR2 (643 aa).

A disordered region spans residues 1 to 52 (MEKSSSCESLGAQLPAARLPSEDSLSSASTSHSENSVHTKSASAISSDSIST). Phosphoserine occurs at positions 6 and 9. Positions 23 to 40 (DSLSSASTSHSENSVHTK) are enriched in polar residues. Over residues 41-52 (SASAISSDSIST) the composition is skewed to low complexity. Residue Ser58 is modified to Phosphoserine. Residues 68 to 139 (NKLAEMEEPA…GVISRVEKIG (72 aa)) enclose the GRAM domain. One can recognise a Myotubularin phosphatase domain in the interval 205–580 (GWKLYDPLLE…RHLELWVGYY (376 aa)). Residues Asn330, Asn355, and Ile356 each contribute to the a 1,2-diacyl-sn-glycero-3-phospho-(1D-myo-inositol-3,5-bisphosphate) site. Asn330, Asn355, and Ile356 together coordinate a 1,2-diacyl-sn-glycero-3-phospho-(1D-myo-inositol-3-phosphate). Catalysis depends on Cys417, which acts as the Phosphocysteine intermediate. A 1,2-diacyl-sn-glycero-3-phospho-(1D-myo-inositol-3,5-bisphosphate)-binding residues include Ser418, Asp419, Gly420, Trp421, Asp422, Arg423, Arg459, and Arg463. A 1,2-diacyl-sn-glycero-3-phospho-(1D-myo-inositol-3-phosphate) contacts are provided by Ser418, Asp419, Gly420, Trp421, Asp422, and Arg423. Residue Arg463 coordinates a 1,2-diacyl-sn-glycero-3-phospho-(1D-myo-inositol-3-phosphate). Residues 593-627 (IHSRYKELLAKRAELQRKVEELQREISNRSTSSSE) are a coiled coil. Residues 614-643 (LQREISNRSTSSSERASSPAQCVTPVQTVV) are disordered. The segment covering 620–631 (NRSTSSSERASS) has biased composition (low complexity). Polar residues predominate over residues 632–643 (PAQCVTPVQTVV).

Belongs to the protein-tyrosine phosphatase family. Non-receptor class myotubularin subfamily. Homodimer (via coiled-coil domain). Heterotetramer consisting of one MTMR2 dimer and one SBF2/MTMR13 dimer; specifically in peripheral nerves stabilizes SBF2/MTMR13 at the membranes and increases MTMR2 catalytic activity towards phosphatidylinositol 3,5-bisphosphate and to a lesser extent towards phosphatidylinositol 3-phosphate. Heterodimer with SBF1/MTMR5; acts as an adapter for the phosphatase MTMR2 to regulate MTMR2 catalytic activity and subcellular location. Heterodimer with MTMR12. Phosphorylation at Ser-58 decreases MTMR2 localization to endocytic vesicular structures. Expressed in sciatic nerve and in Schwann cells (at protein level). Detected in adult dorsal root ganglia, neurons of the central nervous system, motor neurons, cell soma and neurites of sensory neurons, olfactory bulb, cerebellum and hippocampus.

Its subcellular location is the cytoplasm. It localises to the early endosome membrane. It is found in the perinuclear region. The protein resides in the cell projection. The protein localises to the axon. Its subcellular location is the endosome membrane. It carries out the reaction a 1,2-diacyl-sn-glycero-3-phospho-(1D-myo-inositol-3,5-bisphosphate) + H2O = a 1,2-diacyl-sn-glycero-3-phospho-(1D-myo-inositol-5-phosphate) + phosphate. The catalysed reaction is a 1,2-diacyl-sn-glycero-3-phospho-(1D-myo-inositol-3-phosphate) + H2O = a 1,2-diacyl-sn-glycero-3-phospho-(1D-myo-inositol) + phosphate. It catalyses the reaction 1,2-dioctanoyl-sn-glycero-3-phospho-(1-D-myo-inositol-3-phosphate) + H2O = 1,2-dioctanoyl-sn-glycero-3-phospho-(1D-myo-inositol) + phosphate. The enzyme catalyses 1,2-dioctanoyl-sn-glycero-3-phospho-(1D-myo-inositol-3,5-bisphosphate) + H2O = 1,2-dioctanoyl-sn-glycero-3-phospho-(1D-myo-inositol-5-phosphate) + phosphate. Its function is as follows. Lipid phosphatase that specifically dephosphorylates the D-3 position of phosphatidylinositol 3-phosphate and phosphatidylinositol 3,5-bisphosphate, generating phosphatidylinositol and phosphatidylinositol 5-phosphate. Regulates the level of these phosphoinositides critical for various biological processes including autophagy initiation and autophagosome maturation. The polypeptide is Phosphatidylinositol-3,5-bisphosphate 3-phosphatase MTMR2 (Mus musculus (Mouse)).